The primary structure comprises 141 residues: Putative antiporter subunit mnhB2 (141 aa).

The next 4 membrane-spanning stretches (helical) occupy residues 10 to 30 (SVTK…FFAG), 35 to 55 (GGGF…FLAF), 70 to 90 (KLMI…MFFG), and 116 to 136 (LFEL…MLSI).

The protein belongs to the CPA3 antiporters (TC 2.A.63) subunit B family. In terms of assembly, may form a heterooligomeric complex that consists of seven subunits: mnhA2, mnhB2, mnhC2, mnhD2, mnhE2, mnhF2 and mnhG2.

It localises to the cell membrane. This is Putative antiporter subunit mnhB2 (mnhB2) from Staphylococcus epidermidis (strain ATCC 35984 / DSM 28319 / BCRC 17069 / CCUG 31568 / BM 3577 / RP62A).